Here is a 152-residue protein sequence, read N- to C-terminus: Small ribosomal subunit protein uS15 (152 aa).

The disordered stretch occupies residues 1–20 (MNKRRANGSSHSTRPVRTGS).

Belongs to the universal ribosomal protein uS15 family. Part of the 30S ribosomal subunit.

This chain is Small ribosomal subunit protein uS15, found in Metallosphaera sedula (strain ATCC 51363 / DSM 5348 / JCM 9185 / NBRC 15509 / TH2).